Here is a 388-residue protein sequence, read N- to C-terminus: Succinate--CoA ligase [ADP-forming] subunit beta (388 aa).

ATP-binding positions include lysine 46, 53–55 (GRG), glutamate 99, cysteine 102, and glutamate 107. Residues asparagine 199 and aspartate 213 each coordinate Mg(2+). Substrate is bound by residues asparagine 264 and 321 to 323 (GIV).

Belongs to the succinate/malate CoA ligase beta subunit family. Heterotetramer of two alpha and two beta subunits. The cofactor is Mg(2+).

The enzyme catalyses succinate + ATP + CoA = succinyl-CoA + ADP + phosphate. It carries out the reaction GTP + succinate + CoA = succinyl-CoA + GDP + phosphate. It functions in the pathway carbohydrate metabolism; tricarboxylic acid cycle; succinate from succinyl-CoA (ligase route): step 1/1. Functionally, succinyl-CoA synthetase functions in the citric acid cycle (TCA), coupling the hydrolysis of succinyl-CoA to the synthesis of either ATP or GTP and thus represents the only step of substrate-level phosphorylation in the TCA. The beta subunit provides nucleotide specificity of the enzyme and binds the substrate succinate, while the binding sites for coenzyme A and phosphate are found in the alpha subunit. The polypeptide is Succinate--CoA ligase [ADP-forming] subunit beta (Actinobacillus pleuropneumoniae serotype 3 (strain JL03)).